The primary structure comprises 454 residues: Probable ECA polymerase (454 aa).

The next 11 helical transmembrane spans lie at L3 to L23, F39 to F59, F61 to F81, L119 to F139, G154 to L174, A180 to G200, G201 to G221, W222 to L242, L340 to I360, Y377 to A397, and V409 to F429.

This sequence belongs to the WzyE family. Probably part of a complex composed of WzxE, WzyE and WzzE.

It localises to the cell inner membrane. The protein operates within bacterial outer membrane biogenesis; enterobacterial common antigen biosynthesis. Probably involved in the polymerization of enterobacterial common antigen (ECA) trisaccharide repeat units. In Yersinia pestis bv. Antiqua (strain Angola), this protein is Probable ECA polymerase.